The chain runs to 260 residues: Aspartate/glutamate leucyltransferase (260 aa).

Residues 241-251 (DRLPEEGDRGP) show a composition bias toward basic and acidic residues. The interval 241 to 260 (DRLPEEGDRGPARFPASLTE) is disordered.

It belongs to the R-transferase family. Bpt subfamily.

It is found in the cytoplasm. The catalysed reaction is N-terminal L-glutamyl-[protein] + L-leucyl-tRNA(Leu) = N-terminal L-leucyl-L-glutamyl-[protein] + tRNA(Leu) + H(+). It catalyses the reaction N-terminal L-aspartyl-[protein] + L-leucyl-tRNA(Leu) = N-terminal L-leucyl-L-aspartyl-[protein] + tRNA(Leu) + H(+). Functionally, functions in the N-end rule pathway of protein degradation where it conjugates Leu from its aminoacyl-tRNA to the N-termini of proteins containing an N-terminal aspartate or glutamate. The chain is Aspartate/glutamate leucyltransferase from Gluconacetobacter diazotrophicus (strain ATCC 49037 / DSM 5601 / CCUG 37298 / CIP 103539 / LMG 7603 / PAl5).